A 391-amino-acid polypeptide reads, in one-letter code: Inositol-tetrakisphosphate 1-kinase 2 (391 aa).

1D-myo-inositol 1,3,4-trisphosphate contacts are provided by Lys90 and Lys132. Positions 167 and 217 each coordinate ATP. The 207-residue stretch at 178-384 (KLSDCSGSLF…FFQNLAQVKY (207 aa)) folds into the ATP-grasp domain. 1D-myo-inositol 1,3,4-trisphosphate is bound by residues His228 and Lys260. ATP-binding positions include 249-260 (QEFVNHGGVMFK) and Ser275. Positions 340, 355, and 357 each coordinate Mg(2+). Asn357 serves as a coordination point for 1D-myo-inositol 1,3,4-trisphosphate.

This sequence belongs to the ITPK1 family. As to quaternary structure, monomer. It depends on Mg(2+) as a cofactor. Expressed in seedling roots, cotyledons, rosette leaves, cauline leaves, stems, flowers, siliques and seeds.

It catalyses the reaction 1D-myo-inositol 3,4,5,6-tetrakisphosphate + ATP = 1D-myo-inositol 1,3,4,5,6-pentakisphosphate + ADP + H(+). The catalysed reaction is 1D-myo-inositol 1,3,4-trisphosphate + ATP = 1D-myo-inositol 1,3,4,5-tetrakisphosphate + ADP + H(+). It carries out the reaction 1D-myo-inositol 1,3,4-trisphosphate + ATP = 1D-myo-inositol 1,3,4,6-tetrakisphosphate + ADP + H(+). In terms of biological role, kinase that can phosphorylate various inositol polyphosphate such as Ins(3,4,5,6)P4 or Ins(1,3,4)P3. Phosphorylates Ins(3,4,5,6)P4 to form InsP5. This reaction is thought to have regulatory importance, since Ins(3,4,5,6)P4 is an inhibitor of plasma membrane Ca(2+)-activated Cl(-) channels, while Ins(1,3,4,5,6)P5 is not. Also phosphorylates Ins(1,3,4)P3 or a racemic mixture of Ins(1,4,6)P3 and Ins(3,4,6)P3 to form InsP4. Ins(1,3,4,6)P4 is an essential molecule in the hexakisphosphate (InsP6) pathway. Plays a role in seed coat development and lipid polyester barrier formation. The protein is Inositol-tetrakisphosphate 1-kinase 2 (ITPK2) of Arabidopsis thaliana (Mouse-ear cress).